The chain runs to 536 residues: 2-isopropylmalate synthase (536 aa).

The 266-residue stretch at 8 to 273 (VLIFDTTLRD…FFGRDPESPT (266 aa)) folds into the Pyruvate carboxyltransferase domain. D17, H208, H210, and N244 together coordinate Mn(2+). The interval 408 to 536 (QLQLVQVSCG…PQHDLIKANL (129 aa)) is regulatory domain.

The protein belongs to the alpha-IPM synthase/homocitrate synthase family. LeuA type 1 subfamily. In terms of assembly, homodimer. It depends on Mn(2+) as a cofactor.

Its subcellular location is the cytoplasm. It carries out the reaction 3-methyl-2-oxobutanoate + acetyl-CoA + H2O = (2S)-2-isopropylmalate + CoA + H(+). It participates in amino-acid biosynthesis; L-leucine biosynthesis; L-leucine from 3-methyl-2-oxobutanoate: step 1/4. Catalyzes the condensation of the acetyl group of acetyl-CoA with 3-methyl-2-oxobutanoate (2-ketoisovalerate) to form 3-carboxy-3-hydroxy-4-methylpentanoate (2-isopropylmalate). In Prochlorococcus marinus (strain MIT 9211), this protein is 2-isopropylmalate synthase.